The chain runs to 225 residues: PKHD-type hydroxylase KPK_3192 (225 aa).

One can recognise a Fe2OG dioxygenase domain in the interval 78-177 (TISAPLFNRY…RQASFLWIQS (100 aa)). His-96, Asp-98, and His-158 together coordinate Fe cation. Arg-168 provides a ligand contact to 2-oxoglutarate.

The cofactor is Fe(2+). L-ascorbate is required as a cofactor.

This is PKHD-type hydroxylase KPK_3192 from Klebsiella pneumoniae (strain 342).